A 196-amino-acid polypeptide reads, in one-letter code: S-norcoclaurine synthase 2 (196 aa).

The first 19 residues, 1-19 (MRMEVVLVVFLMFIGTINC), serve as a signal peptide directing secretion. 104 to 106 (YRE) serves as a coordination point for dopamine. K118 acts as the Proton donor in catalysis. Position 137 (D137) interacts with (4-hydroxyphenyl)acetaldehyde.

This sequence belongs to the BetVI family.

It carries out the reaction (4-hydroxyphenyl)acetaldehyde + dopamine = (S)-norcoclaurine + H2O. With respect to regulation, not inhibited by O-phenanthroline or EDTA. In terms of biological role, involved in the biosynthesis of the common precursor of all benzylisoquinoline alkaloids such as morphine, sanguinarine, codeine or berberine. Condenses dopamine and pyruvic acid or 4-hydroxyphenylpyruvate. The chain is S-norcoclaurine synthase 2 (PR10A) from Coptis japonica (Japanese goldthread).